The following is a 309-amino-acid chain: NAD kinase 2 (309 aa).

Asp81 serves as the catalytic Proton acceptor. NAD(+) is bound by residues 81–82 (DG), 155–156 (NE), Asp185, 196–201 (TAYALS), and Asn255.

It belongs to the NAD kinase family. Requires a divalent metal cation as cofactor.

It localises to the cytoplasm. The catalysed reaction is NAD(+) + ATP = ADP + NADP(+) + H(+). In terms of biological role, involved in the regulation of the intracellular balance of NAD and NADP, and is a key enzyme in the biosynthesis of NADP. Catalyzes specifically the phosphorylation on 2'-hydroxyl of the adenosine moiety of NAD to yield NADP. The chain is NAD kinase 2 from Gloeobacter violaceus (strain ATCC 29082 / PCC 7421).